Here is a 423-residue protein sequence, read N- to C-terminus: Methanol:N,N-dimethyl-4-nitrosoaniline oxidoreductase (423 aa).

The protein belongs to the iron-containing alcohol dehydrogenase family. In terms of assembly, homodecamer. The cofactor is Mg(2+). Zn(2+) is required as a cofactor. NADPH serves as cofactor.

It carries out the reaction methanol + A = formaldehyde + AH2. Catalyzes the oxidation of methanol to yield formaldehyde. While the in vivo electron acceptor is not known, N,N-dimethyl-4-nitrosoaniline (NDMA) can serve this function in vitro and is reduced to 4-(hydroxylamino)-N,N-dimethylaniline. It is also able to use ethanol and formaldehyde with an activity comparable to methanol, and has a weak activity with methylamine as substrate. The protein is Methanol:N,N-dimethyl-4-nitrosoaniline oxidoreductase of Mycobacterium sp. (strain DSM 3803 / JC1).